The sequence spans 946 residues: Bifunctional glutamine synthetase adenylyltransferase/adenylyl-removing enzyme (946 aa).

An adenylyl removase region spans residues 1–440 (MKPLSSPLQQ…VFNELIGDDE (440 aa)). An adenylyl transferase region spans residues 449 to 946 (SEQWRELWQD…ASWQKWLVEE (498 aa)).

The protein belongs to the GlnE family. The cofactor is Mg(2+).

The enzyme catalyses [glutamine synthetase]-O(4)-(5'-adenylyl)-L-tyrosine + phosphate = [glutamine synthetase]-L-tyrosine + ADP. It catalyses the reaction [glutamine synthetase]-L-tyrosine + ATP = [glutamine synthetase]-O(4)-(5'-adenylyl)-L-tyrosine + diphosphate. Involved in the regulation of glutamine synthetase GlnA, a key enzyme in the process to assimilate ammonia. When cellular nitrogen levels are high, the C-terminal adenylyl transferase (AT) inactivates GlnA by covalent transfer of an adenylyl group from ATP to specific tyrosine residue of GlnA, thus reducing its activity. Conversely, when nitrogen levels are low, the N-terminal adenylyl removase (AR) activates GlnA by removing the adenylyl group by phosphorolysis, increasing its activity. The regulatory region of GlnE binds the signal transduction protein PII (GlnB) which indicates the nitrogen status of the cell. The chain is Bifunctional glutamine synthetase adenylyltransferase/adenylyl-removing enzyme from Escherichia coli (strain SE11).